A 254-amino-acid polypeptide reads, in one-letter code: Type III pantothenate kinase (254 aa).

6–13 (DLGNSAIK) provides a ligand contact to ATP. Substrate is bound by residues tyrosine 99 and 106 to 109 (GVDR). Residue aspartate 108 is the Proton acceptor of the active site. Aspartate 128 lines the K(+) pocket. Threonine 131 contacts ATP. Position 182 (threonine 182) interacts with substrate.

This sequence belongs to the type III pantothenate kinase family. In terms of assembly, homodimer. It depends on NH4(+) as a cofactor. Requires K(+) as cofactor.

The protein resides in the cytoplasm. It carries out the reaction (R)-pantothenate + ATP = (R)-4'-phosphopantothenate + ADP + H(+). The protein operates within cofactor biosynthesis; coenzyme A biosynthesis; CoA from (R)-pantothenate: step 1/5. Functionally, catalyzes the phosphorylation of pantothenate (Pan), the first step in CoA biosynthesis. The polypeptide is Type III pantothenate kinase (Halorhodospira halophila (strain DSM 244 / SL1) (Ectothiorhodospira halophila (strain DSM 244 / SL1))).